Reading from the N-terminus, the 189-residue chain is Protein GrpE (189 aa).

Positions 1-22 (MKEQQKETEQNIEEINDETVTE) are disordered. Residues 10–22 (QNIEEINDETVTE) are compositionally biased toward acidic residues.

It belongs to the GrpE family. Homodimer.

It is found in the cytoplasm. Functionally, participates actively in the response to hyperosmotic and heat shock by preventing the aggregation of stress-denatured proteins, in association with DnaK and GrpE. It is the nucleotide exchange factor for DnaK and may function as a thermosensor. Unfolded proteins bind initially to DnaJ; upon interaction with the DnaJ-bound protein, DnaK hydrolyzes its bound ATP, resulting in the formation of a stable complex. GrpE releases ADP from DnaK; ATP binding to DnaK triggers the release of the substrate protein, thus completing the reaction cycle. Several rounds of ATP-dependent interactions between DnaJ, DnaK and GrpE are required for fully efficient folding. This Leuconostoc citreum (strain KM20) protein is Protein GrpE.